The sequence spans 154 residues: 3-hydroxyacyl-[acyl-carrier-protein] dehydratase FabZ (154 aa).

Residue histidine 57 is part of the active site.

It belongs to the thioester dehydratase family. FabZ subfamily.

Its subcellular location is the cytoplasm. The catalysed reaction is a (3R)-hydroxyacyl-[ACP] = a (2E)-enoyl-[ACP] + H2O. In terms of biological role, involved in unsaturated fatty acids biosynthesis. Catalyzes the dehydration of short chain beta-hydroxyacyl-ACPs and long chain saturated and unsaturated beta-hydroxyacyl-ACPs. This chain is 3-hydroxyacyl-[acyl-carrier-protein] dehydratase FabZ, found in Allorhizobium ampelinum (strain ATCC BAA-846 / DSM 112012 / S4) (Agrobacterium vitis (strain S4)).